The chain runs to 724 residues: Golgin subfamily A member 6-like protein 6 (724 aa).

Disordered regions lie at residues 1–108 (MLMW…HQEA), 314–342 (QEEK…MRRQ), 374–454 (MHEQ…EMWR), 517–548 (QEEM…KMWR), and 561–724 (WRQE…MQEH). The segment covering 15 to 29 (LPTHPHLPTHPHLPT) has biased composition (basic residues). Residues 39–60 (MSKETRQSKLAEAKEQLTDHHP) are compositionally biased toward basic and acidic residues. 2 stretches are compositionally biased toward polar residues: residues 61-71 (QTNPSVGTAAS) and 79-91 (NNGT…TSGG). Basic and acidic residues predominate over residues 94 to 108 (SPEDEQKASHQHQEA). The stretch at 164-686 (ELEQALSAVA…EKMWEQEEKM (523 aa)) forms a coiled coil.

This sequence belongs to the GOLGA6 family.

The sequence is that of Golgin subfamily A member 6-like protein 6 (GOLGA6L6) from Homo sapiens (Human).